Consider the following 206-residue polypeptide: MKSARTSRAWIKAHINDNFVRKANHEGYRSRAAYKLREIAEHDALFVPGMTVVDLGAVPGSWSQVALESVGPTGKVFALDMLDMQPLPGMTFIQGDFRENEVLAMLEAALGGKRADLVISDMSPNLTGIRVSDQAQGMYLAELALIFCREHLNPGKNFLVKVFQGSDFEAFRQMMQTDFSKVVIRKPKASRDRSKELYLLGLEKII.

5 residues coordinate S-adenosyl-L-methionine: glycine 60, tryptophan 62, aspartate 80, aspartate 96, and aspartate 121. The active-site Proton acceptor is lysine 161.

The protein belongs to the class I-like SAM-binding methyltransferase superfamily. RNA methyltransferase RlmE family.

It localises to the cytoplasm. It carries out the reaction uridine(2552) in 23S rRNA + S-adenosyl-L-methionine = 2'-O-methyluridine(2552) in 23S rRNA + S-adenosyl-L-homocysteine + H(+). Specifically methylates the uridine in position 2552 of 23S rRNA at the 2'-O position of the ribose in the fully assembled 50S ribosomal subunit. This Nitrosomonas europaea (strain ATCC 19718 / CIP 103999 / KCTC 2705 / NBRC 14298) protein is Ribosomal RNA large subunit methyltransferase E.